A 352-amino-acid chain; its full sequence is Holliday junction branch migration complex subunit RuvB (352 aa).

The segment at 1-181 (MTDRIVGAAK…FGIPVRLHFY (181 aa)) is large ATPase domain (RuvB-L). Residues L20, R21, G62, K65, T66, T67, 128–130 (EDF), R171, Y181, and R218 contribute to the ATP site. T66 lines the Mg(2+) pocket. The small ATPAse domain (RuvB-S) stretch occupies residues 182–252 (EVAELEGIVR…AADKALQRLE (71 aa)). Residues 255-352 (ELGLDALDHR…FDGDEENGSA (98 aa)) form a head domain (RuvB-H) region. Residues R291, R310, and R315 each coordinate DNA.

It belongs to the RuvB family. In terms of assembly, homohexamer. Forms an RuvA(8)-RuvB(12)-Holliday junction (HJ) complex. HJ DNA is sandwiched between 2 RuvA tetramers; dsDNA enters through RuvA and exits via RuvB. An RuvB hexamer assembles on each DNA strand where it exits the tetramer. Each RuvB hexamer is contacted by two RuvA subunits (via domain III) on 2 adjacent RuvB subunits; this complex drives branch migration. In the full resolvosome a probable DNA-RuvA(4)-RuvB(12)-RuvC(2) complex forms which resolves the HJ.

The protein localises to the cytoplasm. It catalyses the reaction ATP + H2O = ADP + phosphate + H(+). The RuvA-RuvB-RuvC complex processes Holliday junction (HJ) DNA during genetic recombination and DNA repair, while the RuvA-RuvB complex plays an important role in the rescue of blocked DNA replication forks via replication fork reversal (RFR). RuvA specifically binds to HJ cruciform DNA, conferring on it an open structure. The RuvB hexamer acts as an ATP-dependent pump, pulling dsDNA into and through the RuvAB complex. RuvB forms 2 homohexamers on either side of HJ DNA bound by 1 or 2 RuvA tetramers; 4 subunits per hexamer contact DNA at a time. Coordinated motions by a converter formed by DNA-disengaged RuvB subunits stimulates ATP hydrolysis and nucleotide exchange. Immobilization of the converter enables RuvB to convert the ATP-contained energy into a lever motion, pulling 2 nucleotides of DNA out of the RuvA tetramer per ATP hydrolyzed, thus driving DNA branch migration. The RuvB motors rotate together with the DNA substrate, which together with the progressing nucleotide cycle form the mechanistic basis for DNA recombination by continuous HJ branch migration. Branch migration allows RuvC to scan DNA until it finds its consensus sequence, where it cleaves and resolves cruciform DNA. This is Holliday junction branch migration complex subunit RuvB from Parvibaculum lavamentivorans (strain DS-1 / DSM 13023 / NCIMB 13966).